The chain runs to 432 residues: Septin-11 (432 aa).

Alanine 2 bears the N-acetylalanine mark. Residue serine 9 is modified to Phosphoserine. The Septin-type G domain maps to glutamine 38 to glutamate 304. Residues glycine 48–serine 55 are G1 motif. GTP-binding positions include glycine 48–serine 55, glycine 103, lysine 184–glutamate 192, glycine 238, and arginine 253. The G3 motif stretch occupies residues aspartate 100 to glycine 103. The interval alanine 183–aspartate 186 is G4 motif. Residues glutamine 320 to glycine 413 are a coiled coil. A compositionally biased stretch (low complexity) spans glutamine 403–glutamine 416. Residues glutamine 403–glutamate 432 are disordered.

This sequence belongs to the TRAFAC class TrmE-Era-EngA-EngB-Septin-like GTPase superfamily. Septin GTPase family. Septins polymerize into heterooligomeric protein complexes that form filaments, and can associate with cellular membranes, actin filaments and microtubules. Forms homooligomers. GTPase activity is required for filament formation. Interacts with SEPTIN7, SEPTIN9 and SEPTIN12.

The protein resides in the cytoplasm. Its subcellular location is the cytoskeleton. It localises to the synapse. The protein localises to the cell projection. It is found in the dendritic spine. The protein resides in the axon. Its function is as follows. Filament-forming cytoskeletal GTPase. May play a role in cytokinesis (Potential). May play a role in the cytoarchitecture of neurons, including dendritic arborization and dendritic spines, and in GABAergic synaptic connectivity. The chain is Septin-11 from Macaca fascicularis (Crab-eating macaque).